We begin with the raw amino-acid sequence, 421 residues long: MGQTITEKIFSEHVGREVKAGEIVECELDMIIGNDITTPISIKAFRDSGAKKLAKPDNFAIVLDHFIPAKDIASANQAKISREFAYEHNLKHFFDEKDMGIEHALLPEKGLVVPGDVIIGADSHTCTHGALGAFATGMGSTDLAYGMITGKNWFKVPPSIKVIYTGKLGEHVYGKDLILELIRRIGVDGALYKALEFTGDTIENLDMDGRFSLCNMAIEAGAKNGIIAVDEVTKAFLADKPLAREPKIHYSDEDAEYEQVIEIDVNNLEPVIAFPHLPSNGRPISEAAKMDLKVDQVFIGSCTNGRLSDIAIAAEILKGRKVARHTRMIVTPATQKILKEAEKRGYIDILIDAGAVVSNPTCGACLGGYMGILADNERCVSTTNRNFVGRMGARTSEIYLANSAVAAASAVAGKIADPREL.

Cys-302, Cys-362, and Cys-365 together coordinate [4Fe-4S] cluster.

It belongs to the aconitase/IPM isomerase family. LeuC type 2 subfamily. As to quaternary structure, heterodimer of LeuC and LeuD. Requires [4Fe-4S] cluster as cofactor.

It catalyses the reaction (2R,3S)-3-isopropylmalate = (2S)-2-isopropylmalate. Its pathway is amino-acid biosynthesis; L-leucine biosynthesis; L-leucine from 3-methyl-2-oxobutanoate: step 2/4. In terms of biological role, catalyzes the isomerization between 2-isopropylmalate and 3-isopropylmalate, via the formation of 2-isopropylmaleate. This Nitratiruptor sp. (strain SB155-2) protein is 3-isopropylmalate dehydratase large subunit.